We begin with the raw amino-acid sequence, 213 residues long: Orotate phosphoribosyltransferase (213 aa).

K26 contacts 5-phospho-alpha-D-ribose 1-diphosphate. 34 to 35 (FF) is an orotate binding site. Residues 72 to 73 (YK), R99, K100, K103, H105, and 124 to 132 (DDVITAGTA) contribute to the 5-phospho-alpha-D-ribose 1-diphosphate site. Orotate-binding residues include T128 and R156.

The protein belongs to the purine/pyrimidine phosphoribosyltransferase family. PyrE subfamily. In terms of assembly, homodimer. Mg(2+) is required as a cofactor.

It catalyses the reaction orotidine 5'-phosphate + diphosphate = orotate + 5-phospho-alpha-D-ribose 1-diphosphate. It participates in pyrimidine metabolism; UMP biosynthesis via de novo pathway; UMP from orotate: step 1/2. Functionally, catalyzes the transfer of a ribosyl phosphate group from 5-phosphoribose 1-diphosphate to orotate, leading to the formation of orotidine monophosphate (OMP). This Escherichia coli O127:H6 (strain E2348/69 / EPEC) protein is Orotate phosphoribosyltransferase.